The following is a 689-amino-acid chain: MANKEYPLAKFRNIGIMAHIDAGKTTATERILFYTGKTHKIGETHEGAATMDWMEQEQERGITITSAATTCFWKDHQVNIIDTPGHVDFTVEVERSLRVLDGAVTILDAKSGVEPQTETVWRQADNYKVPRMVFINKMDKLGADFLMSVGTLRERLHANAVPLQLPIGAEDSFSGIIDLVKNDAIIYKDDLGTVMDETEIPEDMKEMAEEYRTMLLEAVAEVDEDIMMKYLEGEEISVEEIKTALRKGVLANKIVPVLCGSAYKNKGVQLLLDAIIEFMPSPLDIEDVKGTEPTTGEEMTRPADAKAPLAALAFKIATDPFIGKLAFTRIYSGTMKSGTYVFNSNKGKRERIGRLVKMHANHREDVEELKAGELGAIVGLKDTTTGDTLCDDADPIILENMEFPEPVIDVSIEPKTKAGQEKMGIALAKLAEEDPTFRTYTNQETGQTIIAGMGELHLEIIVDRLIREFKVECNVGQPQVAYKETIKKHVKAEGKFIRQSGGRGQYGHCWIEMMPTEGEYEFQNAVVGGSIPKEYIPAIDNGIQEASQSGIIAGYPVINFKVKLFDGSYHDVDSSEMAFKIAGSMAFKNAMSKADAVLLEPSMKVEVVVPEEYMGDVIGDINSRRGRIEGMTPRAGAEVIRAFVPLSEMFGYATTLRSKTQGRGNYVMQFDHYEEVPKSIQDKVIGERK.

Residues 9–283 (AKFRNIGIMA…AIIEFMPSPL (275 aa)) form the tr-type G domain. GTP-binding positions include 18–25 (AHIDAGKT), 82–86 (DTPGH), and 136–139 (NKMD).

This sequence belongs to the TRAFAC class translation factor GTPase superfamily. Classic translation factor GTPase family. EF-G/EF-2 subfamily.

Its subcellular location is the cytoplasm. In terms of biological role, catalyzes the GTP-dependent ribosomal translocation step during translation elongation. During this step, the ribosome changes from the pre-translocational (PRE) to the post-translocational (POST) state as the newly formed A-site-bound peptidyl-tRNA and P-site-bound deacylated tRNA move to the P and E sites, respectively. Catalyzes the coordinated movement of the two tRNA molecules, the mRNA and conformational changes in the ribosome. In Clostridium botulinum (strain Okra / Type B1), this protein is Elongation factor G.